A 496-amino-acid chain; its full sequence is Rhamnulokinase (496 aa).

13 to 17 (ASSGR) lines the ATP pocket. Residues glycine 83 and 236–238 (HDT) each bind substrate. Aspartate 237 serves as the catalytic Proton acceptor. An ATP-binding site is contributed by threonine 259. Substrate is bound at residue asparagine 296. Residue glutamine 304 coordinates ATP. A disulfide bond links cysteine 353 and cysteine 370. Glycine 402 lines the ATP pocket. Cysteine 413 and cysteine 417 are joined by a disulfide.

The protein belongs to the rhamnulokinase family. Mg(2+) serves as cofactor.

The catalysed reaction is L-rhamnulose + ATP = L-rhamnulose 1-phosphate + ADP + H(+). It functions in the pathway carbohydrate degradation; L-rhamnose degradation; glycerone phosphate from L-rhamnose: step 2/3. In terms of biological role, involved in the catabolism of L-rhamnose (6-deoxy-L-mannose). Catalyzes the transfer of the gamma-phosphate group from ATP to the 1-hydroxyl group of L-rhamnulose to yield L-rhamnulose 1-phosphate. This Pectobacterium carotovorum subsp. carotovorum (strain PC1) protein is Rhamnulokinase.